The sequence spans 110 residues: Large ribosomal subunit protein uL22 (110 aa).

Belongs to the universal ribosomal protein uL22 family. As to quaternary structure, part of the 50S ribosomal subunit.

In terms of biological role, this protein binds specifically to 23S rRNA; its binding is stimulated by other ribosomal proteins, e.g. L4, L17, and L20. It is important during the early stages of 50S assembly. It makes multiple contacts with different domains of the 23S rRNA in the assembled 50S subunit and ribosome. The globular domain of the protein is located near the polypeptide exit tunnel on the outside of the subunit, while an extended beta-hairpin is found that lines the wall of the exit tunnel in the center of the 70S ribosome. This chain is Large ribosomal subunit protein uL22, found in Exiguobacterium sibiricum (strain DSM 17290 / CCUG 55495 / CIP 109462 / JCM 13490 / 255-15).